A 669-amino-acid polypeptide reads, in one-letter code: Cysteine-rich receptor-like protein kinase 10 (669 aa).

The first 34 residues, 1 to 34, serve as a signal peptide directing secretion; the sequence is MRRNTDQESPIMSYYSSFFFLFLFSFLTSFRVSA. Residues 35-285 lie on the Extracellular side of the membrane; that stretch reads QDPTYVYHTC…PRSGKDGNSK (251 aa). Gnk2-homologous domains follow at residues 38 to 142 and 148 to 252; these read TYVY…NQNI and TTGG…IYAF. N49, N53, N71, and N80 each carry an N-linked (GlcNAc...) asparagine glycan. Intrachain disulfides connect C96-C105 and C108-C133. N-linked (GlcNAc...) asparagine glycans are attached at residues N114, N159, N185, and N196. Intrachain disulfides connect C209-C218 and C221-C243. The span at 260-274 shows a compositional bias: pro residues; that stretch reads PPPPPPSISTPPVSA. The tract at residues 260–280 is disordered; the sequence is PPPPPPSISTPPVSAPPRSGK. Residues 286-306 traverse the membrane as a helical segment; that stretch reads VLVIAIVVPIIVAVLLFIAGY. The Cytoplasmic segment spans residues 307–669; that stretch reads CFLTRRARKS…DASITDIHPR (363 aa). The region spanning 348-634 is the Protein kinase domain; that stretch reads FVESNKIGQG…TLPVPRQPGL (287 aa). ATP-binding positions include 354-362 and K376; that span reads IGQGGFGEV. At Y421 the chain carries Phosphotyrosine. The Proton acceptor role is filled by D473. Residue S477 is modified to Phosphoserine. T513 is subject to Phosphothreonine. Residue Y521 is modified to Phosphotyrosine.

The protein belongs to the protein kinase superfamily. Ser/Thr protein kinase family. CRK subfamily. Interacts with CRKIP1 (KAPP), CRKIP2 and CRKIP3, three kinase-associated type 2C proteins.

It is found in the membrane. The catalysed reaction is L-seryl-[protein] + ATP = O-phospho-L-seryl-[protein] + ADP + H(+). The enzyme catalyses L-threonyl-[protein] + ATP = O-phospho-L-threonyl-[protein] + ADP + H(+). The sequence is that of Cysteine-rich receptor-like protein kinase 10 (CRK10) from Arabidopsis thaliana (Mouse-ear cress).